A 93-amino-acid polypeptide reads, in one-letter code: UPF0175 protein AF_0100 (93 aa).

The protein belongs to the UPF0175 family.

The protein is UPF0175 protein AF_0100 of Archaeoglobus fulgidus (strain ATCC 49558 / DSM 4304 / JCM 9628 / NBRC 100126 / VC-16).